The following is a 490-amino-acid chain: Betaine aldehyde dehydrogenase (490 aa).

T26, I27, and D93 together coordinate K(+). 150 to 152 (GAW) lines the NAD(+) pocket. The Charge relay system role is filled by K162. 176 to 179 (KPSE) serves as a coordination point for NAD(+). Position 180 (V180) interacts with K(+). Residue 230 to 233 (GVAS) coordinates NAD(+). L246 is a binding site for K(+). E252 serves as the catalytic Proton acceptor. G254, C286, and E387 together coordinate NAD(+). C286 serves as the catalytic Nucleophile. The residue at position 286 (C286) is a Cysteine sulfenic acid (-SOH). 2 residues coordinate K(+): K457 and G460. E464 (charge relay system) is an active-site residue.

It belongs to the aldehyde dehydrogenase family. In terms of assembly, dimer of dimers. K(+) serves as cofactor.

It catalyses the reaction betaine aldehyde + NAD(+) + H2O = glycine betaine + NADH + 2 H(+). The protein operates within amine and polyamine biosynthesis; betaine biosynthesis via choline pathway; betaine from betaine aldehyde: step 1/1. Involved in the biosynthesis of the osmoprotectant glycine betaine. Catalyzes the irreversible oxidation of betaine aldehyde to the corresponding acid. The sequence is that of Betaine aldehyde dehydrogenase from Escherichia coli (strain ATCC 8739 / DSM 1576 / NBRC 3972 / NCIMB 8545 / WDCM 00012 / Crooks).